Consider the following 326-residue polypeptide: Chitinase 12 (326 aa).

A signal peptide spans 1-21 (MRALAVVAMVATAFLAAAVHA). The Chitin-binding type-1 domain maps to 22–62 (EQCGSQAGGAVCPNCLCCSQFGWCGSTSDYCGAGCQSQCSA). 8 disulfides stabilise this stretch: Cys-24-Cys-39, Cys-33-Cys-45, Cys-36-Cys-65, Cys-38-Cys-52, Cys-56-Cys-60, Cys-102-Cys-165, Cys-179-Cys-187, and Cys-286-Cys-318. Glu-147 acts as the Proton donor in catalysis.

The protein belongs to the glycosyl hydrolase 19 family. Chitinase class I subfamily. As to expression, expressed in meristems and at lower levels in roots and sheaths.

It catalyses the reaction Random endo-hydrolysis of N-acetyl-beta-D-glucosaminide (1-&gt;4)-beta-linkages in chitin and chitodextrins.. Its function is as follows. Hydrolyzes chitin and plays a role in defense against fungal pathogens containing chitin. Its overexpression confers enhanced resistance to sheath blight pathogen (R.solani). The sequence is that of Chitinase 12 (Cht12) from Oryza sativa subsp. japonica (Rice).